The chain runs to 842 residues: Unconventional myosin-Ia (842 aa).

One can recognise a Myosin motor domain in the interval 1 to 686 (GVEDLILLEP…TLFYLEEQRR (686 aa)). Position 93–100 (93–100 (GESGAGKT)) interacts with ATP. Residues 563 to 585 (VAILMKNLYSKNPNYIRCIKPND) are actin-binding. 3 IQ domains span residues 689–712 (LQQLATLIQKVYRGWRCRTHYQQM), 713–733 (RKSQILLSAWFRGNKQKKHYG), and 735–764 (IRSSVLLIQAFVRGWKARKNYRKYFRSGAR).

This sequence belongs to the TRAFAC class myosin-kinesin ATPase superfamily. Myosin family. In terms of processing, phosphorylated by ALPK1.

Its function is as follows. Involved in directing the movement of organelles along actin filaments. This Rattus norvegicus (Rat) protein is Unconventional myosin-Ia (Myo1a).